The primary structure comprises 319 residues: Translocon-associated protein subunit alpha (319 aa).

The first 21 residues, 1-21, serve as a signal peptide directing secretion; that stretch reads MRLLPRLLLLFLLAFPAAVLL. Topologically, residues 22–208 are lumenal; sequence RGGPGGSLAV…EREDGLDGET (187 aa). Acidic residues predominate over residues 35–76; sequence LTEDEETVEDPIIEDEDDEAEVEEDEPTDLAEEKEEEEDVSS. The interval 35-84 is disordered; the sequence is LTEDEETVEDPIIEDEDDEAEVEEDEPTDLAEEKEEEEDVSSEPEASPSA. Asparagine 137 and asparagine 192 each carry an N-linked (GlcNAc...) asparagine glycan. A helical membrane pass occupies residues 209 to 229; sequence IFMYMFLAGLGLLVVVGLHQL. Topologically, residues 230 to 319 are cytoplasmic; that stretch reads LESRKRKRPI…SLRQLAVCGI (90 aa). Serine 248 bears the Phosphoserine mark. Threonine 261 carries the post-translational modification Phosphothreonine.

It belongs to the TRAP-alpha family. Heterotetramer of TRAP-alpha, TRAP-beta, TRAP-delta and TRAP-gamma. Interacts with palmitoylated calnexin (CALX), the interaction is required for efficient folding of glycosylated proteins.

It is found in the endoplasmic reticulum membrane. Functionally, TRAP proteins are part of a complex whose function is to bind calcium to the ER membrane and thereby regulate the retention of ER resident proteins. May be involved in the recycling of the translocation apparatus after completion of the translocation process or may function as a membrane-bound chaperone facilitating folding of translocated proteins. The polypeptide is Translocon-associated protein subunit alpha (Ssr1) (Rattus norvegicus (Rat)).